Here is a 496-residue protein sequence, read N- to C-terminus: Lysine--tRNA ligase (496 aa).

Residues glutamate 405 and glutamate 412 each contribute to the Mg(2+) site.

This sequence belongs to the class-II aminoacyl-tRNA synthetase family. Homodimer. It depends on Mg(2+) as a cofactor.

It localises to the cytoplasm. It carries out the reaction tRNA(Lys) + L-lysine + ATP = L-lysyl-tRNA(Lys) + AMP + diphosphate. The chain is Lysine--tRNA ligase from Vesicomyosocius okutanii subsp. Calyptogena okutanii (strain HA).